A 54-amino-acid chain; its full sequence is Metallothionein-4 (54 aa).

This sequence belongs to the metallothionein superfamily. Type 11 family.

This chain is Metallothionein-4 (MTP4), found in Yarrowia lipolytica (strain CLIB 122 / E 150) (Yeast).